A 189-amino-acid polypeptide reads, in one-letter code: MGLADFKDVDRNELSMIEVAHAILEDRGERMAFADIVNEVQKYLNKSDEEIRQRLPQFYTDMNTDGRFISMGENVWALRTWFKFEAVDEEVDHPEDDGDEESTRKHHKKVNAFLATTEGDDVIDYENDDPEDEDLSDDSDADEDDADDNSGDDYDDNEDDDDDDSLLDGIEDQLSQMDDDDLDDDEDEE.

Residues 14–81 enclose the HTH HARE-type domain; it reads LSMIEVAHAI…GENVWALRTW (68 aa). Acidic residues-rich tracts occupy residues 90–100 and 118–189; these read EVDHPEDDGDE and EGDD…EDEE. The interval 90 to 189 is disordered; that stretch reads EVDHPEDDGD…DDLDDDEDEE (100 aa).

The protein belongs to the RpoE family. RNAP is composed of a core of 2 alpha, a beta and a beta' subunits. The core is associated with a delta subunit and one of several sigma factors.

In terms of biological role, participates in both the initiation and recycling phases of transcription. In the presence of the delta subunit, RNAP displays an increased specificity of transcription, a decreased affinity for nucleic acids, and an increased efficiency of RNA synthesis because of enhanced recycling. In Lactobacillus delbrueckii subsp. bulgaricus (strain ATCC 11842 / DSM 20081 / BCRC 10696 / JCM 1002 / NBRC 13953 / NCIMB 11778 / NCTC 12712 / WDCM 00102 / Lb 14), this protein is Probable DNA-directed RNA polymerase subunit delta.